The following is a 104-amino-acid chain: Protein RnfH (104 aa).

Belongs to the UPF0125 (RnfH) family.

This is Protein RnfH from Pseudomonas savastanoi pv. phaseolicola (strain 1448A / Race 6) (Pseudomonas syringae pv. phaseolicola (strain 1448A / Race 6)).